A 107-amino-acid polypeptide reads, in one-letter code: Death-associated protein-like 1 (107 aa).

The tract at residues 1 to 26 (MANEVQVQLSPLKGGHPPAVKAGGKR) is disordered.

In terms of tissue distribution, detected in the corneal epithelium, and only in trace amounts in the liver, bladder, brain, heart, and stomach.

Functionally, may play a role in the early stages of epithelial differentiation or in apoptosis. The sequence is that of Death-associated protein-like 1 (DAPL1) from Bos taurus (Bovine).